The sequence spans 507 residues: MQSQQQPVFISIILLAINTDAAAPTTAVNAREFGLLCTLVRAEDNLEDRRSAGQAAKEVVALAAKIELILANLKHIERLAAAEPEAAPKESRSDETPEACKASKATVCSQAAQTYKTIRPDEKLALAFLAETTGDLRSTFNVTLKQITAAAASHARYFGENTESRPALDKIKKALYGSPEAKGDAIIESGDGTRSAACGNTDGNAANSAAKRATAALICLCGGDNTNTGNDACFTQTTADINYAKKGGEVERAWTEIRQKCKAGAAANKVTAAQLKAAAAELAALIHQKRGEKAVAGLLGAAQINNGAVDCDGSEANGKGSCVILSTSASKYKVETPDWLNALEAAIADLEQEQIELDNGRKAEAQILALNSSXTTLLAQAVEPTKQPPAKAAAAPEKKSNPQKDCNKNTKKRDCKEGDGCKWSSTEATEGAFCKPKDGEGQTSAAGAGDAGASDTEAKKCSDKKKEEECKSPNCKWDGKECKDSSILANKQFALSVASAAFVALLF.

An N-terminal signal peptide occupies residues 1 to 21; the sequence is MQSQQQPVFISIILLAINTDA. Residues 83 to 95 are compositionally biased toward basic and acidic residues; that stretch reads EPEAAPKESRSDE. Residues 83–102 form a disordered region; that stretch reads EPEAAPKESRSDETPEACKA. Asn141 and Asn371 each carry an N-linked (GlcNAc...) asparagine glycan. Over residues 384-395 the composition is skewed to low complexity; sequence PTKQPPAKAAAA. The interval 384-474 is disordered; that stretch reads PTKQPPAKAA…KKEEECKSPN (91 aa). Residues 396 to 420 are compositionally biased toward basic and acidic residues; that stretch reads PEKKSNPQKDCNKNTKKRDCKEGDG. The segment covering 444–455 has biased composition (low complexity); sequence SAAGAGDAGASD. The segment covering 456-474 has biased composition (basic and acidic residues); sequence TEAKKCSDKKKEEECKSPN. The GPI-anchor amidated aspartate moiety is linked to residue Asp484. Positions 485 to 507 are cleaved as a propeptide — removed in mature form; sequence SSILANKQFALSVASAAFVALLF.

The protein resides in the cell membrane. VSG forms a coat on the surface of the parasite. The trypanosome evades the immune response of the host by expressing a series of antigenically distinct VSGs from an estimated 1000 VSG genes. The protein is Variant surface glycoprotein ILTAT 1.25 of Trypanosoma brucei brucei.